Reading from the N-terminus, the 128-residue chain is S-protein homolog 5 (128 aa).

Positions 1 to 20 (MEKVSIVCFFFFLLFGSGYG) are cleaved as a signal peptide.

It belongs to the plant self-incompatibility (S1) protein family.

The protein localises to the secreted. The sequence is that of S-protein homolog 5 from Arabidopsis thaliana (Mouse-ear cress).